A 146-amino-acid polypeptide reads, in one-letter code: Anti-sigma F factor (146 aa).

The protein belongs to the anti-sigma-factor family.

It carries out the reaction L-seryl-[protein] + ATP = O-phospho-L-seryl-[protein] + ADP + H(+). The catalysed reaction is L-threonyl-[protein] + ATP = O-phospho-L-threonyl-[protein] + ADP + H(+). Functionally, binds to sigma F and blocks its ability to form an RNA polymerase holoenzyme (E-sigma F). Phosphorylates SpoIIAA on a serine residue. This phosphorylation may enable SpoIIAA to act as an anti-anti-sigma factor that counteracts SpoIIAB and thus releases sigma F from inhibition. This chain is Anti-sigma F factor, found in Shouchella clausii (strain KSM-K16) (Alkalihalobacillus clausii).